A 158-amino-acid chain; its full sequence is Snaclec convulxin subunit alpha (158 aa).

The signal sequence occupies residues 1 to 23 (MGRFIFVSFGLLVLFLSLSGTGA). Intrachain disulfides connect Cys27–Cys38, Cys55–Cys152, and Cys127–Cys144. The 125-residue stretch at 34–158 (YDQHCYRIFN…PFVCKFPPQC (125 aa)) folds into the C-type lectin domain.

This sequence belongs to the snaclec family. As to quaternary structure, tetramer of heterodimers of alpha and beta subunits (alphabeta)(4); disulfide-linked. Expressed by the venom gland.

It localises to the secreted. Functionally, snake venom lectin that activates platelets by binding to the platelet collagen receptor glycoprotein VI (GP6). The indirect activation of integrin alpha-IIb/beta-3 (ITGA2B/ITGB3) also induced by the toxin is upstream the cytoskeletal translocation of GPIb, FcRgamma (FCER1G) and 14-3-3zeta (YWHAZ). This is Snaclec convulxin subunit alpha from Crotalus durissus terrificus (South American rattlesnake).